The sequence spans 362 residues: Probable dual-specificity RNA methyltransferase RlmN (362 aa).

Catalysis depends on Glu105, which acts as the Proton acceptor. One can recognise a Radical SAM core domain in the interval 111 to 344; it reads HEYGNSICVT…VTIRREQGHD (234 aa). The cysteines at positions 118 and 349 are disulfide-linked. [4Fe-4S] cluster contacts are provided by Cys125, Cys129, and Cys132. S-adenosyl-L-methionine contacts are provided by residues 175–176, Ser207, 230–232, and Asn306; these read GE and SLH. The active-site S-methylcysteine intermediate is the Cys349.

It belongs to the radical SAM superfamily. RlmN family. [4Fe-4S] cluster is required as a cofactor.

It is found in the cytoplasm. The enzyme catalyses adenosine(2503) in 23S rRNA + 2 reduced [2Fe-2S]-[ferredoxin] + 2 S-adenosyl-L-methionine = 2-methyladenosine(2503) in 23S rRNA + 5'-deoxyadenosine + L-methionine + 2 oxidized [2Fe-2S]-[ferredoxin] + S-adenosyl-L-homocysteine. It catalyses the reaction adenosine(37) in tRNA + 2 reduced [2Fe-2S]-[ferredoxin] + 2 S-adenosyl-L-methionine = 2-methyladenosine(37) in tRNA + 5'-deoxyadenosine + L-methionine + 2 oxidized [2Fe-2S]-[ferredoxin] + S-adenosyl-L-homocysteine. Its function is as follows. Specifically methylates position 2 of adenine 2503 in 23S rRNA and position 2 of adenine 37 in tRNAs. This chain is Probable dual-specificity RNA methyltransferase RlmN, found in Bacillus cereus (strain G9842).